The sequence spans 226 residues: Phosphoglycolate phosphatase (226 aa).

Residue Asp5 is the Nucleophile of the active site. The Mg(2+) site is built by Asp5 and Asp7. Substrate is bound at residue Lys142. Positions 164 and 168 each coordinate Mg(2+).

Belongs to the archaeal SPP-like hydrolase family. It depends on Mg(2+) as a cofactor.

It catalyses the reaction 2-phosphoglycolate + H2O = glycolate + phosphate. Catalyzes the dephosphorylation of 2-phosphoglycolate. In Sulfurisphaera tokodaii (strain DSM 16993 / JCM 10545 / NBRC 100140 / 7) (Sulfolobus tokodaii), this protein is Phosphoglycolate phosphatase.